A 253-amino-acid polypeptide reads, in one-letter code: 5'-nucleotidase SurE (253 aa).

Asp8, Asp9, Ser40, and Asn93 together coordinate a divalent metal cation.

It belongs to the SurE nucleotidase family. Requires a divalent metal cation as cofactor.

It localises to the cytoplasm. It catalyses the reaction a ribonucleoside 5'-phosphate + H2O = a ribonucleoside + phosphate. In terms of biological role, nucleotidase that shows phosphatase activity on nucleoside 5'-monophosphates. The chain is 5'-nucleotidase SurE from Methylobacterium sp. (strain 4-46).